Reading from the N-terminus, the 301-residue chain is 2-(hydroxymethyl)glutarate dehydrogenase (301 aa).

NAD(+) is bound by residues 8–22 (GFIG…MAIN) and serine 99. The active site involves lysine 174. An NAD(+)-binding site is contributed by lysine 243.

The protein belongs to the HIBADH-related family. Homotetramer.

It carries out the reaction (S)-2-hydroxymethylglutarate + NAD(+) = 2-formylglutarate + NADH + H(+). It functions in the pathway cofactor degradation; nicotinate degradation; propanoate and pyruvate from 6-hydroxynicotinate: step 3/8. Catalyzes the conversion of 2-formylglutarate to (S)-2-hydroxymethylglutarate. Has very low activity with (S)-3-hydroxyisobutyrate. The chain is 2-(hydroxymethyl)glutarate dehydrogenase from Eubacterium barkeri (Clostridium barkeri).